The following is a 1692-amino-acid chain: Fatty acid synthase alpha subunit hexA (1692 aa).

A disordered region spans residues 44 to 80; it reads AVEEPVDETPAPETAPERPPLSRAKTAAVKPQETAAP. A Carrier domain is found at 90–174; that stretch reads LSAEEIVRAL…RVSSALLSKL (85 aa). An O-(pantetheine 4'-phosphoryl)serine modification is found at serine 125. Positions 508-746 are ketoreductase (KR) domain; the sequence is FAGKNILITG…IAMLMTPELV (239 aa). Positions 948 to 1430 constitute a Ketosynthase family 3 (KS3) domain; it reads KEYLHEVAVE…QKGGQVVGVA (483 aa). The active-site For beta-ketoacyl synthase activity is cysteine 1135. A disordered region spans residues 1263–1287; that stretch reads GQAQLDKSSPSTNTTSRTSSVSLAR. Residues 1270–1284 show a composition bias toward low complexity; it reads SSPSTNTTSRTSSVS. Residues histidine 1315 and histidine 1356 each act as for beta-ketoacyl synthase activity in the active site. Aspartate 1569 provides a ligand contact to Mg(2+). Acetyl-CoA-binding positions include 1569–1571, 1615–1625, 1639–1642, and 1668–1670; these read DLV, EAVFKCLHTQT, KSDN, and ISH. A Mg(2+)-binding site is contributed by serine 1669.

Belongs to the thiolase-like superfamily. Fungal fatty acid synthetase subunit alpha family. In terms of assembly, [Alpha(6)beta(6)] hexamers of two multifunctional subunits (alpha and beta). 4'-phosphopantetheine is transferred from CoA to a specific serine of the acyl carrier domain by the C-terminal PPT domain. This modification is essential for activity because fatty acids are bound in thioester linkage to the sulfhydryl of the prosthetic group.

It catalyses the reaction acetyl-CoA + n malonyl-CoA + 2n NADPH + 4n H(+) = a long-chain-acyl-CoA + n CoA + n CO2 + 2n NADP(+).. The catalysed reaction is a fatty acyl-[ACP] + malonyl-[ACP] + H(+) = a 3-oxoacyl-[ACP] + holo-[ACP] + CO2. It carries out the reaction a (3R)-hydroxyacyl-[ACP] + NADP(+) = a 3-oxoacyl-[ACP] + NADPH + H(+). Its pathway is mycotoxin biosynthesis. Its function is as follows. Fatty acid synthase alpha subunit; part of the fragmented gene cluster that mediates the biosynthesis of dothistromin (DOTH), a polyketide toxin very similar in structure to the aflatoxin precursor, versicolorin B. The first step of the pathway is the conversion of acetate to norsolorinic acid (NOR) and requires the fatty acid synthase subunits hexA and hexB, as well as the polyketide synthase pksA. PksA combines a hexanoyl starter unit and 7 malonyl-CoA extender units to synthesize the precursor NOR. The hexanoyl starter unit is provided to the acyl-carrier protein (ACP) domain by the fungal fatty acid synthase hexA/hexB. The second step is the conversion of NOR to averantin (AVN) and requires the norsolorinic acid ketoreductase nor1, which catalyzes the dehydration of norsolorinic acid to form (1'S)-averantin. The cytochrome P450 monooxygenase avnA then catalyzes the hydroxylation of AVN to 5'hydroxyaverantin (HAVN). The next step is performed by adhA that transforms HAVN to averufin (AVF). Averufin might then be converted to hydroxyversicolorone by cypX and avfA. Hydroxyversicolorone is further converted versiconal hemiacetal acetate (VHA) by moxY. VHA is then the substrate for the versiconal hemiacetal acetate esterase est1 to yield versiconal (VAL). Versicolorin B synthase vbsA then converts VAL to versicolorin B (VERB) by closing the bisfuran ring. Then, the activity of the versicolorin B desaturase verB leads to versicolorin A (VERA). DotB, a predicted chloroperoxidase, may perform epoxidation of the A-ring of VERA. Alternatively, a cytochrome P450, such as cypX or avnA could catalyze this step. It is also possible that another, uncharacterized, cytochrome P450 enzyme is responsible for this step. Opening of the epoxide could potentially be achieved by the epoxide hydrolase epoA. However, epoA seems not to be required for DOTH biosynthesis, but other epoxide hydrolases may have the ability to complement this hydrolysis. Alternatively, opening of the epoxide ring could be achieved non-enzymatically. The next step is the deoxygenation of ring A to yield the 5,8-dihydroxyanthraquinone which is most likely catalyzed by the NADPH dehydrogenase encoded by ver1. The last stages of DOTH biosynthesis are proposed to involve hydroxylation of the bisfuran. OrdB and norB might have oxidative roles here. An alternative possibility is that cytochrome P450 monoogenases such as avnA and cypX might perform these steps in addition to previously proposed steps. The polypeptide is Fatty acid synthase alpha subunit hexA (Dothistroma septosporum (strain NZE10 / CBS 128990) (Red band needle blight fungus)).